We begin with the raw amino-acid sequence, 163 residues long: Phosphopantetheine adenylyltransferase (163 aa).

Ser-10 contacts substrate. ATP is bound by residues 10-11 (SF) and His-18. Residues Lys-42, Leu-74, and Arg-88 each coordinate substrate. ATP-binding positions include 89–91 (GLR), Glu-99, and 124–130 (YSFLSSS).

The protein belongs to the bacterial CoaD family. As to quaternary structure, homohexamer. Requires Mg(2+) as cofactor.

Its subcellular location is the cytoplasm. It catalyses the reaction (R)-4'-phosphopantetheine + ATP + H(+) = 3'-dephospho-CoA + diphosphate. It participates in cofactor biosynthesis; coenzyme A biosynthesis; CoA from (R)-pantothenate: step 4/5. Functionally, reversibly transfers an adenylyl group from ATP to 4'-phosphopantetheine, yielding dephospho-CoA (dPCoA) and pyrophosphate. This Bacillus cereus (strain G9842) protein is Phosphopantetheine adenylyltransferase.